The following is a 120-amino-acid chain: UPF0295 protein Exig_0660 (120 aa).

The next 2 membrane-spanning stretches (helical) occupy residues alanine 16–phenylalanine 36 and valine 41–isoleucine 61.

Belongs to the UPF0295 family.

The protein localises to the cell membrane. The protein is UPF0295 protein Exig_0660 of Exiguobacterium sibiricum (strain DSM 17290 / CCUG 55495 / CIP 109462 / JCM 13490 / 255-15).